The following is a 96-amino-acid chain: MDKEVTKIESDDTSSVEIKVLLFARARELTGVPDLTLKMPSGSTTQKCLDELVLKFPSLEEVRSCVVLALNEEYTTDSAIVQHRDELAIIPPISGG.

Gly96 bears the 1-thioglycine; alternate mark. Gly96 is modified (glycyl adenylate; alternate).

The protein belongs to the MoaD family. MOCS2A subfamily. As to quaternary structure, heterotetramer; composed of 2 small (MOCS2A) and 2 large (MOCS2B) subunits. Post-translationally, C-terminal thiocarboxylation occurs in 2 steps, it is first acyl-adenylated (-COAMP) via the hesA/moeB/thiF part of MOCS3, then thiocarboxylated (-COSH) via the rhodanese domain of MOCS3.

The protein resides in the cytoplasm. It participates in cofactor biosynthesis; molybdopterin biosynthesis. Its function is as follows. Acts as a sulfur carrier required for molybdopterin biosynthesis. Component of the molybdopterin synthase complex that catalyzes the conversion of precursor Z into molybdopterin by mediating the incorporation of 2 sulfur atoms into precursor Z to generate a dithiolene group. In the complex, serves as sulfur donor by being thiocarboxylated (-COSH) at its C-terminus by MOCS3. After interaction with MOCS2B, the sulfur is then transferred to precursor Z to form molybdopterin. The chain is Molybdopterin synthase sulfur carrier subunit from Arabidopsis thaliana (Mouse-ear cress).